The sequence spans 122 residues: Putative cryptic phosphonate transport system permease protein PhnE2 (122 aa).

Residues 1–114 (MLALFIHTTG…VTVSLLDFLS (114 aa)) enclose the ABC transmembrane type-1 domain. Transmembrane regions (helical) follow at residues 3–23 (ALFIHTTGVLSKLLSEAVEAI), 39–59 (LEEILYGVLPQVMPLLISYSL), 68–88 (SATVVGMVGAGGIGVTLWEAI), and 93–113 (FQQTCALMVLIIVTVSLLDFL).

The protein belongs to the binding-protein-dependent transport system permease family. In terms of assembly, if the reading frame is restored, the complex is composed of two ATP-binding proteins (PhnC), two transmembrane proteins (PhnE) and a solute-binding protein (PhnD).

It localises to the cell inner membrane. In terms of biological role, C-terminal fragment of the PhnE protein, part of a phosphonate usage operon that is cryptic in K12 strains. Growth of K12 strains on phosphonate can be observed when it is used as the sole phosphorus source after a 60 hour lag period, suggesting the operon is activated. An intact PhnE in strain B is (AC A0A140NFA3). Part of the binding-protein-dependent transport system for phosphonates; probably responsible for the translocation of the substrate across the membrane. This is Putative cryptic phosphonate transport system permease protein PhnE2 (phnE) from Escherichia coli (strain K12).